A 221-amino-acid polypeptide reads, in one-letter code: Ribonuclease HII (221 aa).

The 192-residue stretch at 29-220 folds into the RNase H type-2 domain; it reads RRVAGVDEVG…LRDLQAGEIG (192 aa). A divalent metal cation contacts are provided by Asp35, Glu36, and Asp129. A disordered region spans residues 198–221; it reads LGPSPQHRRSFAPLRDLQAGEIGG.

The protein belongs to the RNase HII family. The cofactor is Mn(2+). Mg(2+) is required as a cofactor.

The protein resides in the cytoplasm. The enzyme catalyses Endonucleolytic cleavage to 5'-phosphomonoester.. In terms of biological role, endonuclease that specifically degrades the RNA of RNA-DNA hybrids. The sequence is that of Ribonuclease HII from Synechococcus sp. (strain JA-3-3Ab) (Cyanobacteria bacterium Yellowstone A-Prime).